The primary structure comprises 629 residues: DNA-directed RNA polymerase subunit beta' (629 aa).

Residues Cys-70, Cys-72, Cys-85, and Cys-88 each coordinate Zn(2+). Asp-472, Asp-474, and Asp-476 together coordinate Mg(2+).

The protein belongs to the RNA polymerase beta' chain family. RpoC1 subfamily. As to quaternary structure, in plastids the minimal PEP RNA polymerase catalytic core is composed of four subunits: alpha, beta, beta', and beta''. When a (nuclear-encoded) sigma factor is associated with the core the holoenzyme is formed, which can initiate transcription. Mg(2+) serves as cofactor. Requires Zn(2+) as cofactor.

The protein resides in the plastid. It localises to the chloroplast. The catalysed reaction is RNA(n) + a ribonucleoside 5'-triphosphate = RNA(n+1) + diphosphate. DNA-dependent RNA polymerase catalyzes the transcription of DNA into RNA using the four ribonucleoside triphosphates as substrates. In Porphyra purpurea (Red seaweed), this protein is DNA-directed RNA polymerase subunit beta'.